The chain runs to 123 residues: Probable cytochrome c 2.2 (123 aa).

The interval 1-21 is disordered; sequence MGKKKSDTASGGAIPEGDNEK. Heme c is bound by residues C30, C33, H34, and M95.

It belongs to the cytochrome c family. Post-translationally, binds 1 heme c group covalently per subunit.

Its subcellular location is the mitochondrion intermembrane space. Functionally, electron carrier protein. The oxidized form of the cytochrome c heme group can accept an electron from the heme group of the cytochrome c1 subunit of cytochrome reductase. Cytochrome c then transfers this electron to the cytochrome oxidase complex, the final protein carrier in the mitochondrial electron-transport chain. The polypeptide is Probable cytochrome c 2.2 (cyc-2.2) (Caenorhabditis elegans).